The chain runs to 433 residues: 4-hydroxy-3-methylbut-2-en-1-yl diphosphate synthase (flavodoxin) (433 aa).

Residues 1–13 (MNKPETVTENSLA) are compositionally biased toward polar residues. The tract at residues 1–23 (MNKPETVTENSLASDVAGPAPRH) is disordered. The [4Fe-4S] cluster site is built by cysteine 314, cysteine 317, cysteine 360, and glutamate 367.

Belongs to the IspG family. [4Fe-4S] cluster serves as cofactor.

It carries out the reaction (2E)-4-hydroxy-3-methylbut-2-enyl diphosphate + oxidized [flavodoxin] + H2O + 2 H(+) = 2-C-methyl-D-erythritol 2,4-cyclic diphosphate + reduced [flavodoxin]. It functions in the pathway isoprenoid biosynthesis; isopentenyl diphosphate biosynthesis via DXP pathway; isopentenyl diphosphate from 1-deoxy-D-xylulose 5-phosphate: step 5/6. Converts 2C-methyl-D-erythritol 2,4-cyclodiphosphate (ME-2,4cPP) into 1-hydroxy-2-methyl-2-(E)-butenyl 4-diphosphate. The polypeptide is 4-hydroxy-3-methylbut-2-en-1-yl diphosphate synthase (flavodoxin) (Bradyrhizobium sp. (strain ORS 278)).